The primary structure comprises 155 residues: Ribosome maturation factor RimP (155 aa).

Belongs to the RimP family.

The protein resides in the cytoplasm. In terms of biological role, required for maturation of 30S ribosomal subunits. The polypeptide is Ribosome maturation factor RimP (Synechococcus sp. (strain WH7803)).